The chain runs to 127 residues: S1-like domain-containing protein C146.08c (127 aa).

In terms of domain architecture, S1-like spans 10–86 (SFDPPARLEK…NKIDGTILYV (77 aa)). Residues 107–127 (ESLNQNDSEESSSSEEEYDSD) form a disordered region. Acidic residues predominate over residues 113 to 127 (DSEESSSSEEEYDSD). Tyr-124 is modified (phosphotyrosine). At Ser-126 the chain carries Phosphoserine.

Belongs to the EIF1AD family.

The protein resides in the cytoplasm. The protein localises to the nucleus. This Schizosaccharomyces pombe (strain 972 / ATCC 24843) (Fission yeast) protein is S1-like domain-containing protein C146.08c.